A 216-amino-acid polypeptide reads, in one-letter code: MOB kinase activator-like 1 homolog C (216 aa).

Cysteine 78, cysteine 83, histidine 160, and histidine 165 together coordinate Zn(2+).

The protein belongs to the MOB1/phocein family.

The sequence is that of MOB kinase activator-like 1 homolog C (mobC) from Dictyostelium discoideum (Social amoeba).